Reading from the N-terminus, the 357-residue chain is Alanine racemase, catabolic (357 aa).

Lysine 33 serves as the catalytic Proton acceptor; specific for D-alanine. Lysine 33 is subject to N6-(pyridoxal phosphate)lysine. Lysine 122 is modified (N6-carboxylysine). Arginine 129 serves as a coordination point for substrate. Residue tyrosine 253 is the Proton acceptor; specific for L-alanine of the active site. Methionine 301 contacts substrate.

It belongs to the alanine racemase family. Homodimer. It depends on pyridoxal 5'-phosphate as a cofactor.

The enzyme catalyses L-alanine = D-alanine. Its function is as follows. Isomerizes L-alanine to D-alanine which is then oxidized to pyruvate by DadA. In Pseudomonas aeruginosa (strain ATCC 15692 / DSM 22644 / CIP 104116 / JCM 14847 / LMG 12228 / 1C / PRS 101 / PAO1), this protein is Alanine racemase, catabolic.